A 404-amino-acid chain; its full sequence is MHYSEIMVRYGELSTKGKNRMRFINKLKRNIQSVLSIYPQVHVKADRDRTHIYLHGTDYQPVAESLKQIFGIQNFSPSYRVKKSVPALIEAVQTIMKQVYQEGMTFKITSKRSDHSFELDSRELNQTLGDAVFMAIPNVQVKMKAPDIELRVEIREEAAYISYETIRGAGGLPVGTSGKGMLMLSGGIDSPVAGYLALKRGVDIEAVHFASPPYTSPGALKKAQDLTRKLTKFGGNIQFIEVPFTDIQEEIKAKAPEAYLMTLTRRFMMRITDRIREERGAQVIINGESLGQVASQTIESMQAINAVTNTPVIRPVVTMDKLEIIEIAEKIDTFQISIQPFEDCCTIFAPDRPKTNPKIKNAEQYEARLDVEGLVERAVAGIMITEIRPQAETDEVDELIEGLL.

In terms of domain architecture, THUMP spans 60 to 165 (QPVAESLKQI…EEAAYISYET (106 aa)). ATP is bound by residues 183–184 (ML), 208–209 (HF), arginine 265, glycine 287, and glutamine 296.

It belongs to the ThiI family.

It localises to the cytoplasm. It catalyses the reaction [ThiI sulfur-carrier protein]-S-sulfanyl-L-cysteine + a uridine in tRNA + 2 reduced [2Fe-2S]-[ferredoxin] + ATP + H(+) = [ThiI sulfur-carrier protein]-L-cysteine + a 4-thiouridine in tRNA + 2 oxidized [2Fe-2S]-[ferredoxin] + AMP + diphosphate. The enzyme catalyses [ThiS sulfur-carrier protein]-C-terminal Gly-Gly-AMP + S-sulfanyl-L-cysteinyl-[cysteine desulfurase] + AH2 = [ThiS sulfur-carrier protein]-C-terminal-Gly-aminoethanethioate + L-cysteinyl-[cysteine desulfurase] + A + AMP + 2 H(+). Its pathway is cofactor biosynthesis; thiamine diphosphate biosynthesis. Functionally, catalyzes the ATP-dependent transfer of a sulfur to tRNA to produce 4-thiouridine in position 8 of tRNAs, which functions as a near-UV photosensor. Also catalyzes the transfer of sulfur to the sulfur carrier protein ThiS, forming ThiS-thiocarboxylate. This is a step in the synthesis of thiazole, in the thiamine biosynthesis pathway. The sulfur is donated as persulfide by IscS. The chain is Probable tRNA sulfurtransferase from Streptococcus gordonii (strain Challis / ATCC 35105 / BCRC 15272 / CH1 / DL1 / V288).